Consider the following 364-residue polypeptide: Probable dual-specificity RNA methyltransferase RlmN (364 aa).

Glu-107 (proton acceptor) is an active-site residue. Residues 113 to 346 (HEYGNSVCVT…ATIRREQGSD (234 aa)) form the Radical SAM core domain. An intrachain disulfide couples Cys-120 to Cys-351. Cys-127, Cys-131, and Cys-134 together coordinate [4Fe-4S] cluster. S-adenosyl-L-methionine contacts are provided by residues 177–178 (GE), Ser-209, 232–234 (SLH), and Asn-308. Cys-351 functions as the S-methylcysteine intermediate in the catalytic mechanism.

The protein belongs to the radical SAM superfamily. RlmN family. The cofactor is [4Fe-4S] cluster.

The protein localises to the cytoplasm. The catalysed reaction is adenosine(2503) in 23S rRNA + 2 reduced [2Fe-2S]-[ferredoxin] + 2 S-adenosyl-L-methionine = 2-methyladenosine(2503) in 23S rRNA + 5'-deoxyadenosine + L-methionine + 2 oxidized [2Fe-2S]-[ferredoxin] + S-adenosyl-L-homocysteine. It catalyses the reaction adenosine(37) in tRNA + 2 reduced [2Fe-2S]-[ferredoxin] + 2 S-adenosyl-L-methionine = 2-methyladenosine(37) in tRNA + 5'-deoxyadenosine + L-methionine + 2 oxidized [2Fe-2S]-[ferredoxin] + S-adenosyl-L-homocysteine. Functionally, specifically methylates position 2 of adenine 2503 in 23S rRNA and position 2 of adenine 37 in tRNAs. Confers resistance to some classes of antibiotics. This chain is Probable dual-specificity RNA methyltransferase RlmN, found in Staphylococcus epidermidis (strain ATCC 12228 / FDA PCI 1200).